The primary structure comprises 161 residues: uncharacterized protein (161 aa).

The next 2 membrane-spanning stretches (helical) occupy residues 13–35 and 40–62; these read VAAVFAALYTSILGLAVLIPHAN and VFSAVMAAGLGILIALLAVPFIS.

It localises to the cell membrane. This is an uncharacterized protein from Archaeoglobus fulgidus (strain ATCC 49558 / DSM 4304 / JCM 9628 / NBRC 100126 / VC-16).